The sequence spans 450 residues: MFLKNQNIHFVGIGGSGMSGIAEVLINLGHRVSGSDLKKTDVTEYLKAVGAKIYIGHSCKNIKSAEVVVTSTAISRNNPEVVAALKKRIPIIARIEMLVELARLKYAVTITGTHGKTTTTSLTSLVLHNGGLDPTIVIGGRLKNLKTNAKLGRGDYIVVEADESDGSFLRLSPIITVVTNIDNDHLDYYDSMENLKEAFVKHINCIPFYGTAIICSDNEVVRKIIPQITRRYITYGLMGNPDIKASNIKVLKNHTSFDVFYMRKKVGSVCMKILGKHNVSNSLAAIGVGLRLGISFSSIADTINKFDGVSRRLEIKGEKNGMMVIDDYGHHPTEVAATLRAIKLFWPERRLVVLFQPHRYTRTKQLFNEFGRSFSDADFVKVLDIYSAGEQPIDEVTSDLILESLVSNKCKAEKFSDLEEFSKGLSVGDVVLTLGAGDVWKKGEELLALI.

Position 112–118 (112–118 (GTHGKTT)) interacts with ATP.

This sequence belongs to the MurCDEF family.

The protein resides in the cytoplasm. The catalysed reaction is UDP-N-acetyl-alpha-D-muramate + L-alanine + ATP = UDP-N-acetyl-alpha-D-muramoyl-L-alanine + ADP + phosphate + H(+). It functions in the pathway cell wall biogenesis; peptidoglycan biosynthesis. In terms of biological role, cell wall formation. The sequence is that of UDP-N-acetylmuramate--L-alanine ligase from Endomicrobium trichonymphae.